A 729-amino-acid polypeptide reads, in one-letter code: Cellulose synthase catalytic subunit [UDP-forming] (729 aa).

The next 3 membrane-spanning stretches (helical) occupy residues 30–50 (LATW…VAVP), 110–130 (FILG…LVLG), and 171–191 (TTVL…IHLL). The interval 151-244 (LWPSVDVFIP…YVAIFDCDHI (94 aa)) is catalytic subdomain A. The active site involves aspartate 193. Substrate contacts are provided by aspartate 240 and aspartate 242. The catalytic subdomain B stretch occupies residues 321–381 (TALEEVGGVA…AQRIRWARGM (61 aa)). The active site involves aspartate 337. The next 5 membrane-spanning stretches (helical) occupy residues 405-425 (LNAM…TAPL), 427-447 (YLFF…AYAL), 520-540 (LFLL…LIYV), 549-569 (IWFN…TIAT), and 610-630 (MAIM…QIGL). Positions 575 to 671 (QVRSAHRVPL…QERWLVASTF (97 aa)) constitute a PilZ domain.

The protein belongs to the glycosyltransferase 2 family. It depends on Mg(2+) as a cofactor.

Its subcellular location is the cell inner membrane. The catalysed reaction is [(1-&gt;4)-beta-D-glucosyl](n) + UDP-alpha-D-glucose = [(1-&gt;4)-beta-D-glucosyl](n+1) + UDP + H(+). Its pathway is glycan metabolism; bacterial cellulose biosynthesis. Activated by bis-(3'-5') cyclic diguanylic acid (c-di-GMP). Its function is as follows. Catalytic subunit of cellulose synthase. It polymerizes uridine 5'-diphosphate glucose to cellulose, which is produced as an extracellular component for mechanical and chemical protection. In Xanthomonas axonopodis pv. citri (strain 306), this protein is Cellulose synthase catalytic subunit [UDP-forming] (bcsA).